The sequence spans 306 residues: Probable dimethyladenosine transferase (306 aa).

S-adenosyl-L-methionine-binding residues include H30, L32, G57, E78, D106, and N121.

The protein belongs to the class I-like SAM-binding methyltransferase superfamily. rRNA adenine N(6)-methyltransferase family. As to quaternary structure, part of the small subunit (SSU) processome, composed of more than 70 proteins and the RNA chaperone small nucleolar RNA (snoRNA) U3.

The protein localises to the nucleus. The protein resides in the nucleolus. The catalysed reaction is adenosine(1779)/adenosine(1780) in 18S rRNA + 4 S-adenosyl-L-methionine = N(6)-dimethyladenosine(1779)/N(6)-dimethyladenosine(1780) in 18S rRNA + 4 S-adenosyl-L-homocysteine + 4 H(+). Specifically dimethylates two adjacent adenosines in the loop of a conserved hairpin near the 3'-end of 18S rRNA in the 40S particle. Involved in the pre-rRNA processing steps leading to small-subunit rRNA production independently of its RNA-modifying catalytic activity. Part of the small subunit (SSU) processome, first precursor of the small eukaryotic ribosomal subunit. During the assembly of the SSU processome in the nucleolus, many ribosome biogenesis factors, an RNA chaperone and ribosomal proteins associate with the nascent pre-rRNA and work in concert to generate RNA folding, modifications, rearrangements and cleavage as well as targeted degradation of pre-ribosomal RNA by the RNA exosome. This Drosophila melanogaster (Fruit fly) protein is Probable dimethyladenosine transferase.